Reading from the N-terminus, the 222-residue chain is Ribonuclease T (222 aa).

The Exonuclease domain occupies 20-194 (VVIDVETAGF…YDTERTAELF (175 aa)). 4 residues coordinate Mg(2+): D23, E25, H181, and D186. The active-site Proton donor/acceptor is H181.

This sequence belongs to the RNase T family. Homodimer. The cofactor is Mg(2+).

Its function is as follows. Trims short 3' overhangs of a variety of RNA species, leaving a one or two nucleotide 3' overhang. Responsible for the end-turnover of tRNA: specifically removes the terminal AMP residue from uncharged tRNA (tRNA-C-C-A). Also appears to be involved in tRNA biosynthesis. This chain is Ribonuclease T, found in Shewanella sp. (strain MR-4).